We begin with the raw amino-acid sequence, 110 residues long: Cytochrome subunit of sulfide dehydrogenase (110 aa).

The N-terminal stretch at 1–16 (MLAAAPLLLASGNGFA) is a signal peptide. Heme c is bound by residues Cys-41, Cys-44, His-45, and Met-83.

Dimer of one cytochrome and one flavoprotein. Binds 1 heme c group covalently per subunit.

The protein localises to the periplasm. Its function is as follows. Monoheme cytochrome that function as the electron transport subunit of sulfide dehydrogenase. This chain is Cytochrome subunit of sulfide dehydrogenase (fccA), found in Chlorobaculum tepidum (strain ATCC 49652 / DSM 12025 / NBRC 103806 / TLS) (Chlorobium tepidum).